The chain runs to 516 residues: L-amino-acid oxidase (516 aa).

The N-terminal stretch at 1–18 (MNVFFMFSLLFLAALGSC) is a signal peptide. The cysteines at positions 28 and 189 are disulfide-linked. Residues 61-62 (MA), 81-82 (EA), Arg89, and 103-106 (GPMR) each bind FAD. Substrate-binding residues include Arg106 and His239. Val279 contributes to the FAD binding site. Cys349 and Cys430 are oxidised to a cystine. Asn379 carries an N-linked (GlcNAc...) asparagine glycan. Tyr390 contacts substrate. FAD contacts are provided by residues Glu475 and 482–487 (GWIDST). Residue 482–483 (GW) participates in substrate binding.

This sequence belongs to the flavin monoamine oxidase family. FIG1 subfamily. In terms of assembly, homodimer; non-covalently linked. Requires FAD as cofactor. Post-translationally, N-glycosylated. Expressed by the venom gland.

It localises to the secreted. It catalyses the reaction an L-alpha-amino acid + O2 + H2O = a 2-oxocarboxylate + H2O2 + NH4(+). The enzyme catalyses L-leucine + O2 + H2O = 4-methyl-2-oxopentanoate + H2O2 + NH4(+). The catalysed reaction is L-phenylalanine + O2 + H2O = 3-phenylpyruvate + H2O2 + NH4(+). It carries out the reaction L-methionine + O2 + H2O = 4-methylsulfanyl-2-oxobutanoate + H2O2 + NH4(+). It catalyses the reaction L-arginine + O2 + H2O = 5-guanidino-2-oxopentanoate + H2O2 + NH4(+). Functionally, catalyzes an oxidative deamination of predominantly hydrophobic and aromatic L-amino acids, thus producing hydrogen peroxide that may contribute to the diverse toxic effects of this enzyme. Is active on L-Arg, L-Phe, L-Met, and L-Leu and is weakly active on L-Val. Exhibits diverse biological activities, such as hemorrhage, hemolysis, edema, apoptosis of vascular endothelial cells or tumor cell lines, antibacterial and antiparasitic activities, as well as regulation of platelet aggregation. Its effect on platelets is controversial, since it either induces aggregation or inhibits agonist-induced aggregation. These different effects are probably due to different experimental conditions. The protein is L-amino-acid oxidase of Crotalus adamanteus (Eastern diamondback rattlesnake).